The sequence spans 431 residues: Enolase (431 aa).

Glutamine 167 contacts (2R)-2-phosphoglycerate. The active-site Proton donor is glutamate 209. Residues aspartate 246, glutamate 289, and aspartate 316 each contribute to the Mg(2+) site. Residues lysine 341, arginine 370, serine 371, and lysine 392 each coordinate (2R)-2-phosphoglycerate. The Proton acceptor role is filled by lysine 341.

Belongs to the enolase family. As to quaternary structure, component of the RNA degradosome, a multiprotein complex involved in RNA processing and mRNA degradation. The cofactor is Mg(2+).

The protein localises to the cytoplasm. Its subcellular location is the secreted. It localises to the cell surface. The enzyme catalyses (2R)-2-phosphoglycerate = phosphoenolpyruvate + H2O. Its pathway is carbohydrate degradation; glycolysis; pyruvate from D-glyceraldehyde 3-phosphate: step 4/5. Functionally, catalyzes the reversible conversion of 2-phosphoglycerate (2-PG) into phosphoenolpyruvate (PEP). It is essential for the degradation of carbohydrates via glycolysis. This Shewanella putrefaciens (strain CN-32 / ATCC BAA-453) protein is Enolase.